Reading from the N-terminus, the 293-residue chain is ATP synthase subunit a (293 aa).

The next 6 helical transmembrane spans lie at 40–60 (DSLF…WLAA), 98–118 (FVAP…ALDL), 151–171 (DLNV…YYGI), 188–208 (FHAH…LNLI), 225–245 (MFAG…WTGF), and 264–284 (AIFH…LTLV).

It belongs to the ATPase A chain family. As to quaternary structure, F-type ATPases have 2 components, CF(1) - the catalytic core - and CF(0) - the membrane proton channel. CF(1) has five subunits: alpha(3), beta(3), gamma(1), delta(1), epsilon(1). CF(0) has three main subunits: a(1), b(2) and c(9-12). The alpha and beta chains form an alternating ring which encloses part of the gamma chain. CF(1) is attached to CF(0) by a central stalk formed by the gamma and epsilon chains, while a peripheral stalk is formed by the delta and b chains.

The protein resides in the cell inner membrane. Key component of the proton channel; it plays a direct role in the translocation of protons across the membrane. This is ATP synthase subunit a from Bordetella avium (strain 197N).